Reading from the N-terminus, the 201-residue chain is MATAGSAASRRDPGRPCPFSIEHILSSLPERRPATRPPQPVGGRNPAELDEPEAPVPAAPCACCCCCNPRAATRGTPETSSGPGLRLAWPLRLAPATPSPLTAPRAGSPALTGTSGPGPQRRTRRHRTIFSEEQLQALEALFVQNQYPDVGTRERLAVRIRLREERVEVWFKNRRAKWRHQKRASSSRLLPGTKKTPKESC.

Disordered regions lie at residues 1 to 55, 95 to 124, and 179 to 201; these read MATA…PEAP, PATP…RRTR, and RHQK…KESC. A compositionally biased stretch (low complexity) spans 95 to 106; the sequence is PATPSPLTAPRA. Positions 123–182 form a DNA-binding region, homeobox; sequence TRRHRTIFSEEQLQALEALFVQNQYPDVGTRERLAVRIRLREERVEVWFKNRRAKWRHQK.

This sequence belongs to the paired homeobox family. Bicoid subfamily. As to expression, expressed in adult testis.

It localises to the nucleus. In terms of biological role, may have a role in development. May regulate its own transcription. May bind the bicoid consensus sequence TAATCC. This chain is Homeobox protein goosecoid-2 (Gsc2), found in Mus musculus (Mouse).